The primary structure comprises 495 residues: Adenosylhomocysteinase (495 aa).

3 residues coordinate substrate: Thr-71, Asp-156, and Glu-218. 219–221 is an NAD(+) binding site; sequence TTT. Residues Lys-248 and Asp-252 each coordinate substrate. NAD(+) is bound by residues Asn-253, 282 to 287, Glu-305, Asn-340, 361 to 363, and Asn-409; these read GYGDVG and IGH.

This sequence belongs to the adenosylhomocysteinase family. NAD(+) is required as a cofactor.

The protein resides in the cytoplasm. The enzyme catalyses S-adenosyl-L-homocysteine + H2O = L-homocysteine + adenosine. It participates in amino-acid biosynthesis; L-homocysteine biosynthesis; L-homocysteine from S-adenosyl-L-homocysteine: step 1/1. Functionally, may play a key role in the regulation of the intracellular concentration of adenosylhomocysteine. This is Adenosylhomocysteinase from Mycobacterium tuberculosis (strain ATCC 25177 / H37Ra).